We begin with the raw amino-acid sequence, 138 residues long: DNA-directed RNA polymerase subunit omega (138 aa).

This sequence belongs to the RNA polymerase subunit omega family. The RNAP catalytic core consists of 2 alpha, 1 beta, 1 beta' and 1 omega subunit. When a sigma factor is associated with the core the holoenzyme is formed, which can initiate transcription.

The catalysed reaction is RNA(n) + a ribonucleoside 5'-triphosphate = RNA(n+1) + diphosphate. Promotes RNA polymerase assembly. Latches the N- and C-terminal regions of the beta' subunit thereby facilitating its interaction with the beta and alpha subunits. The sequence is that of DNA-directed RNA polymerase subunit omega from Thermodesulfovibrio yellowstonii (strain ATCC 51303 / DSM 11347 / YP87).